We begin with the raw amino-acid sequence, 485 residues long: Cobyric acid synthase (485 aa).

A GATase cobBQ-type domain is found at 250 to 448 (TQTVAVIAYP…LHGMFEDPRV (199 aa)). Cys-334 serves as the catalytic Nucleophile. Residue His-440 is part of the active site.

It belongs to the CobB/CobQ family. CobQ subfamily.

The protein operates within cofactor biosynthesis; adenosylcobalamin biosynthesis. Functionally, catalyzes amidations at positions B, D, E, and G on adenosylcobyrinic A,C-diamide. NH(2) groups are provided by glutamine, and one molecule of ATP is hydrogenolyzed for each amidation. The sequence is that of Cobyric acid synthase from Polaromonas naphthalenivorans (strain CJ2).